A 594-amino-acid polypeptide reads, in one-letter code: Metastasis-associated protein MTA3 (594 aa).

The 147-residue stretch at 1 to 147 folds into the BAH domain; it reads MAANMYRVGD…PSLKTLLADK (147 aa). Residues 148 to 259 enclose the ELM2 domain; it reads GEIRVGPRYQ…SAISVLVPLG (112 aa). Residues 266–318 form the SANT domain; it reads DEMEEWSASEASLFEEALEKYGKDFNDIRQDFLPWKSLTSIIEYYYMWKTTDR. Residues 379-406 form a GATA-type; atypical zinc finger; the sequence is CESCYATQSHQWYSWGPPNMQCRLCAIC. Phosphoserine occurs at positions 428 and 430. Phosphothreonine is present on T455. S519 carries the phosphoserine modification.

This sequence belongs to the metastasis-associated protein family. Component of the nucleosome remodeling and deacetylase (NuRD) repressor complex, composed of core proteins MTA1, MTA2, MTA3, RBBP4, RBBP7, HDAC1, HDAC2, MBD2, MBD3, and peripherally associated proteins CDK2AP1, CDK2AP2, GATAD2A, GATAD2B, CHD3, CHD4 and CHD5. The exact stoichiometry of the NuRD complex is unknown, and some subunits such as MBD2 and MBD3, GATAD2A and GATAD2B, and CHD3, CHD4 and CHD5 define mutually exclusive NuRD complexes. Interacts with BCL6. Interacts with NACC2. Interacts with PWWP2B. Expressed in germinal centers of lymphoid tissues. No expression in nonepithelial cells.

Its subcellular location is the nucleus. The protein localises to the cytoplasm. In terms of biological role, acts as a component of the histone deacetylase NuRD complex which participates in the remodeling of chromatin. Plays a role in maintenance of the normal epithelial architecture through the repression of SNAI1 transcription in a histone deacetylase-dependent manner, and thus the regulation of E-cadherin levels. Contributes to transcriptional repression by BCL6. The polypeptide is Metastasis-associated protein MTA3 (MTA3) (Homo sapiens (Human)).